The primary structure comprises 145 residues: 3-hydroxyacyl-[acyl-carrier-protein] dehydratase FabZ (145 aa).

H48 is a catalytic residue.

This sequence belongs to the thioester dehydratase family. FabZ subfamily.

It localises to the cytoplasm. It carries out the reaction a (3R)-hydroxyacyl-[ACP] = a (2E)-enoyl-[ACP] + H2O. In terms of biological role, involved in unsaturated fatty acids biosynthesis. Catalyzes the dehydration of short chain beta-hydroxyacyl-ACPs and long chain saturated and unsaturated beta-hydroxyacyl-ACPs. This is 3-hydroxyacyl-[acyl-carrier-protein] dehydratase FabZ from Marinobacter nauticus (strain ATCC 700491 / DSM 11845 / VT8) (Marinobacter aquaeolei).